The primary structure comprises 515 residues: Ribonuclease Y (515 aa).

Residues L6–G26 traverse the membrane as a helical segment. The region spanning T205 to I290 is the KH domain. One can recognise an HD domain in the interval V331–S424.

The protein belongs to the RNase Y family.

Its subcellular location is the cell membrane. Endoribonuclease that initiates mRNA decay. The protein is Ribonuclease Y of Syntrophomonas wolfei subsp. wolfei (strain DSM 2245B / Goettingen).